Consider the following 3890-residue polypeptide: Extracellular matrix-binding protein EbhB (3890 aa).

A signal peptide spans 1–39 (MNYRDKIQKFSIRKYTVGTFSTVIATLVFLGFNTSQAHA). The span at 41–59 (ETNQPASVVKQKQQSNNEQ) shows a compositional bias: polar residues. Disordered regions lie at residues 41–152 (ETNQ…GNDN), 249–277 (MPQR…PRSV), 1347–1372 (NEKA…NATT), and 2418–2438 (TITP…TLTA). The span at 65-78 (SQVQNSQNSQNSQS) shows a compositional bias: low complexity. Residues 79–117 (LSATHENEQPNNSQANLVNQKVAQSSTTNDEQPASQNVN) are compositionally biased toward polar residues. The segment covering 130-140 (PDKEESKHKQN) has biased composition (basic and acidic residues). Polar residues-rich tracts occupy residues 141 to 151 (ESQSANKNGND), 250 to 266 (PQRQ…QTRS), 1360 to 1372 (YRTT…NATT), and 2427 to 2438 (HSVSSNPSTLTA). FIVAR domains are found at residues 2524–2580 (AKNH…VSDA), 2610–2666 (SKNN…ISDE), 2687–2750 (DTHA…VQSA), 2780–2836 (AKTK…IAAE), 2864–2919 (AKTQ…IRQN), 2947–3002 (AKNQ…INTN), 3030–3085 (AKTQ…INDK), 3154–3212 (AMTK…VNQK), 3280–3339 (AMTG…VNNA), 3407–3465 (AMGN…VNRA), 3533–3591 (AMGN…VTEA), 3659–3717 (AMNT…ITQK), and 3785–3843 (AMAN…VEAA).

The chain is Extracellular matrix-binding protein EbhB (ebhB) from Staphylococcus aureus (strain N315).